A 553-amino-acid chain; its full sequence is Hydroxylamine reductase (553 aa).

Cys3, Cys6, Cys18, and Cys25 together coordinate [2Fe-2S] cluster. Hybrid [4Fe-2O-2S] cluster contacts are provided by His252, Glu276, Cys320, Cys408, Cys436, Cys461, Glu495, and Lys497. A Cysteine persulfide modification is found at Cys408.

It belongs to the HCP family. Requires [2Fe-2S] cluster as cofactor. The cofactor is hybrid [4Fe-2O-2S] cluster.

It localises to the cytoplasm. The enzyme catalyses A + NH4(+) + H2O = hydroxylamine + AH2 + H(+). In terms of biological role, catalyzes the reduction of hydroxylamine to form NH(3) and H(2)O. In Aliivibrio fischeri (strain MJ11) (Vibrio fischeri), this protein is Hydroxylamine reductase.